The chain runs to 335 residues: N-acetyl-gamma-glutamyl-phosphate reductase (335 aa).

Cysteine 156 is a catalytic residue.

Belongs to the NAGSA dehydrogenase family. Type 1 subfamily.

The protein localises to the cytoplasm. The enzyme catalyses N-acetyl-L-glutamate 5-semialdehyde + phosphate + NADP(+) = N-acetyl-L-glutamyl 5-phosphate + NADPH + H(+). It participates in amino-acid biosynthesis; L-arginine biosynthesis; N(2)-acetyl-L-ornithine from L-glutamate: step 3/4. Catalyzes the NADPH-dependent reduction of N-acetyl-5-glutamyl phosphate to yield N-acetyl-L-glutamate 5-semialdehyde. In Tolumonas auensis (strain DSM 9187 / NBRC 110442 / TA 4), this protein is N-acetyl-gamma-glutamyl-phosphate reductase.